We begin with the raw amino-acid sequence, 206 residues long: Protein-methionine-sulfoxide reductase heme-binding subunit MsrQ (206 aa).

5 helical membrane passes run 13 to 33 (IAIW…INLG), 79 to 99 (LLGL…SILE), 116 to 136 (PYLT…LTST), 147 to 167 (WQKL…HYLW), and 169 to 189 (VKTL…LLLL).

It belongs to the MsrQ family. In terms of assembly, heterodimer of a catalytic subunit (MsrP) and a heme-binding subunit (MsrQ). Requires FMN as cofactor. Heme b serves as cofactor.

It is found in the cell inner membrane. Its function is as follows. Part of the MsrPQ system that repairs oxidized periplasmic proteins containing methionine sulfoxide residues (Met-O), using respiratory chain electrons. Thus protects these proteins from oxidative-stress damage caused by reactive species of oxygen and chlorine generated by the host defense mechanisms. MsrPQ is essential for the maintenance of envelope integrity under bleach stress, rescuing a wide series of structurally unrelated periplasmic proteins from methionine oxidation. MsrQ provides electrons for reduction to the reductase catalytic subunit MsrP, using the quinone pool of the respiratory chain. The chain is Protein-methionine-sulfoxide reductase heme-binding subunit MsrQ from Yersinia pestis bv. Antiqua (strain Antiqua).